We begin with the raw amino-acid sequence, 303 residues long: Kanosamine kinase (303 aa).

This sequence belongs to the ROK (NagC/XylR) family.

It catalyses the reaction kanosamine + ATP = D-kanosamine 6-phosphate + ADP + H(+). The protein operates within antibiotic biosynthesis; rifamycin B biosynthesis. Inhibited by Zn(2+), Cu(2+), and Fe(2+). Functionally, involved in the biosynthesis of 3-amino-5-hydroxybenzoate (AHBA), a compound that then serves as the starter unit for the assembly of a polyketide during the biosynthesis of rifamycin B and other ansamycin antibiotics. Catalyzes only the phosphorylation of kanosamine to yield kanosamine 6-phosphate. This Amycolatopsis mediterranei (strain S699) (Nocardia mediterranei) protein is Kanosamine kinase (rifN).